Reading from the N-terminus, the 540-residue chain is Calnexin homolog (540 aa).

A signal peptide spans 1–29; that stretch reads MELSRRKMCCYIQFCCFVLIGCFISQICA. The Lumenal portion of the chain corresponds to 30–469; it reads SSDAIFYESF…EKAETQPNIT (440 aa). Ca(2+) is bound by residues Ser38 and Asp69. A disulfide bridge links Cys112 with Cys147. Residues Tyr116, Lys118, Tyr138, and Asp145 each coordinate an alpha-D-glucoside. The tract at residues 221-301 is disordered; it reads LIPTKTIPDP…DWDDEEDGEW (81 aa). A p domain (Extended arm) region spans residues 227–360; it reads IPDPDDKKPE…REIPNPDYFE (134 aa). The segment covering 228–253 has biased composition (basic and acidic residues); sequence PDPDDKKPEDWDERAKIPDPEATKPD. 5 tandem repeats follow at residues 229-240, 246-257, 265-276, 284-295, and 299-309. 2 4 X approximate repeats regions span residues 229–295 and 299–356; these read DPDD…DWDD and GEWE…IPNP. 2 stretches are compositionally biased toward acidic residues: residues 254–285 and 292–301; these read DWDEDAPMEILDEEAEKPEGWLDDEPEEIDDP and DWDDEEDGEW. Cys311 and Cys317 form a disulfide bridge. 3 tandem repeats follow at residues 318–328, 332–342, and 346–356. An alpha-D-glucoside is bound at residue Glu375. Asp386 contributes to the Ca(2+) binding site. N-linked (GlcNAc...) asparagine glycosylation is present at Asn467. The chain crosses the membrane as a helical span at residues 470 to 490; it reads IGVIVSIIVVIFSILLKLLFG. Over 491–540 the chain is Cytoplasmic; that stretch reads GKKAAPKVNVVPKKKEEPEASNTAEVREGEEEKTEGEVAAAPRRRPRRDT. Residues 499–540 are disordered; it reads NVVPKKKEEPEASNTAEVREGEEEKTEGEVAAAPRRRPRRDT.

Belongs to the calreticulin family.

Its subcellular location is the endoplasmic reticulum membrane. Calcium-binding protein that interacts with newly synthesized monoglucosylated glycoproteins in the endoplasmic reticulum. It may act in assisting protein assembly and/or in the retention within the ER of unassembled protein subunits. It seems to play a major role in the quality control apparatus of the ER by the retention of incorrectly folded proteins. The protein is Calnexin homolog of Helianthus tuberosus (Jerusalem artichoke).